Reading from the N-terminus, the 848-residue chain is Adenylate cyclase (848 aa).

The interval 1 to 535 (MYLYIETLKQ…DVSHHFPLRL (535 aa)) is catalytic. A regulatory region spans residues 541-848 (KALYSPCEIR…DTPLLQQYFS (308 aa)). At His609 the chain carries Phosphohistidine; by CRR.

The protein belongs to the adenylyl cyclase class-1 family.

It is found in the cytoplasm. The catalysed reaction is ATP = 3',5'-cyclic AMP + diphosphate. The sequence is that of Adenylate cyclase (cyaA) from Shigella flexneri.